The following is a 225-amino-acid chain: Protein-L-isoaspartate O-methyltransferase (225 aa).

S75 is a catalytic residue.

Belongs to the methyltransferase superfamily. L-isoaspartyl/D-aspartyl protein methyltransferase family.

Its subcellular location is the cytoplasm. It carries out the reaction [protein]-L-isoaspartate + S-adenosyl-L-methionine = [protein]-L-isoaspartate alpha-methyl ester + S-adenosyl-L-homocysteine. Catalyzes the methyl esterification of L-isoaspartyl residues in peptides and proteins that result from spontaneous decomposition of normal L-aspartyl and L-asparaginyl residues. It plays a role in the repair and/or degradation of damaged proteins. The chain is Protein-L-isoaspartate O-methyltransferase from Xylella fastidiosa (strain M23).